The following is a 214-amino-acid chain: Protein transport protein SEC22 (214 aa).

At 1 to 192 the chain is on the cytoplasmic side; sequence MIKSTLIFRD…QKINFDLLLS (192 aa). The region spanning 6-117 is the Longin domain; that stretch reads LIFRDDGLPL…YAFVSFDNFL (112 aa). The v-SNARE coiled-coil homology domain occupies 132–192; sequence NLDQLNSDLL…QKINFDLLLS (61 aa). Residues 193-213 form a helical; Anchor for type IV membrane protein membrane-spanning segment; that stretch reads QYAPVALIGLFFLFLVWWLVF. Position 214 (Arg214) is a topological domain, vesicular.

The protein belongs to the synaptobrevin family.

Its subcellular location is the membrane. The protein localises to the endoplasmic reticulum membrane. It is found in the golgi apparatus membrane. Required for transport from the ER to the Golgi complex. This chain is Protein transport protein SEC22 (SEC22), found in Eremothecium gossypii (strain ATCC 10895 / CBS 109.51 / FGSC 9923 / NRRL Y-1056) (Yeast).